Here is a 143-residue protein sequence, read N- to C-terminus: UPF0292 protein Mbar_A0484 (143 aa).

The region spanning 28 to 109 is the Toprim domain; that stretch reads GAIIIVEGKR…KPELEIRNKL (82 aa). Positions 34, 78, and 80 each coordinate Mg(2+).

The protein belongs to the UPF0292 family. Mg(2+) serves as cofactor.

This Methanosarcina barkeri (strain Fusaro / DSM 804) protein is UPF0292 protein Mbar_A0484.